Here is a 60-residue protein sequence, read N- to C-terminus: UPF0434 protein SG0997 (60 aa).

This sequence belongs to the UPF0434 family.

The sequence is that of UPF0434 protein SG0997 from Sodalis glossinidius (strain morsitans).